The sequence spans 264 residues: Glyceraldehyde-3-phosphate dehydrogenase (264 aa).

NAD(+) contacts are provided by Arg45 and Thr93. D-glyceraldehyde 3-phosphate contacts are provided by residues Ser123 to Thr125 and Thr154. The Nucleophile role is filled by Cys124. Asn155 is an NAD(+) binding site. D-glyceraldehyde 3-phosphate contacts are provided by residues Arg169, Thr182 to Gly183, and Arg205. Positions Gly245 to His264 are disordered.

Belongs to the glyceraldehyde-3-phosphate dehydrogenase family. Homotetramer.

The protein resides in the cytoplasm. It catalyses the reaction D-glyceraldehyde 3-phosphate + phosphate + NAD(+) = (2R)-3-phospho-glyceroyl phosphate + NADH + H(+). It functions in the pathway carbohydrate degradation; glycolysis; pyruvate from D-glyceraldehyde 3-phosphate: step 1/5. Catalyzes the oxidative phosphorylation of glyceraldehyde 3-phosphate (G3P) to 1,3-bisphosphoglycerate (BPG) using the cofactor NAD. The first reaction step involves the formation of a hemiacetal intermediate between G3P and a cysteine residue, and this hemiacetal intermediate is then oxidized to a thioester, with concomitant reduction of NAD to NADH. The reduced NADH is then exchanged with the second NAD, and the thioester is attacked by a nucleophilic inorganic phosphate to produce BPG. The chain is Glyceraldehyde-3-phosphate dehydrogenase (gap) from Borrelia hermsii.